A 122-amino-acid polypeptide reads, in one-letter code: MIQQETMLQVGDNTGAKKVLCVKVLGGSTRRYASVGDIIVASVKEASPGGVVKKGDLVKAVVVRTKKEIRRADGSYIAFSENAAVIIDDNNNPKGTRIFGPVARELREKNFMKIISLAPEVL.

The protein belongs to the universal ribosomal protein uL14 family. In terms of assembly, part of the 50S ribosomal subunit. Forms a cluster with proteins L3 and L19. In the 70S ribosome, L14 and L19 interact and together make contacts with the 16S rRNA in bridges B5 and B8.

In terms of biological role, binds to 23S rRNA. Forms part of two intersubunit bridges in the 70S ribosome. The sequence is that of Large ribosomal subunit protein uL14 from Syntrophomonas wolfei subsp. wolfei (strain DSM 2245B / Goettingen).